The sequence spans 223 residues: Large ribosomal subunit protein bL25 (223 aa).

Belongs to the bacterial ribosomal protein bL25 family. CTC subfamily. As to quaternary structure, part of the 50S ribosomal subunit; part of the 5S rRNA/L5/L18/L25 subcomplex. Contacts the 5S rRNA. Binds to the 5S rRNA independently of L5 and L18.

Functionally, this is one of the proteins that binds to the 5S RNA in the ribosome where it forms part of the central protuberance. The sequence is that of Large ribosomal subunit protein bL25 from Albidiferax ferrireducens (strain ATCC BAA-621 / DSM 15236 / T118) (Rhodoferax ferrireducens).